A 2234-amino-acid polypeptide reads, in one-letter code: RNA-directed RNA polymerase L (2234 aa).

Residues 26–283 are endonuclease; sequence ITVVTSQTEM…INLSDEKLSC (258 aa). Residues Glu-51, Asp-89, and Glu-102 each coordinate Mn(2+). Lys-115 is an active-site residue. Residues 879–891 are compositionally biased toward basic and acidic residues; the sequence is KRDDHMKDSEDSK. 2 disordered regions span residues 879-898 and 927-949; these read KRDD…SSDL and KLKE…QQKR. A compositionally biased stretch (polar residues) spans 935-945; it reads RQSSSGSSLKN. In terms of domain architecture, RdRp catalytic spans 1184–1383; the sequence is MEMKMSVNLG…FISSKFNKFV (200 aa). Position 1342 (Asp-1342) interacts with Mg(2+).

This sequence belongs to the Bunyavirales RNA polymerase family. In terms of assembly, homomultimer; the oligomeric structure is essential for the polymerase activity. Interacts with nucleoprotein N. Interacts with protein Z; this interaction inhibits viral transcription and replication, Z partially blocks the product exit tunnel for the releasing nascent RNA product. The cofactor is Mn(2+). Requires Mg(2+) as cofactor.

The protein localises to the virion. The protein resides in the host cytoplasm. It catalyses the reaction RNA(n) + a ribonucleoside 5'-triphosphate = RNA(n+1) + diphosphate. In terms of biological role, RNA-dependent RNA polymerase, which is responsible for the replication and transcription of the viral RNA genome using antigenomic RNA as an intermediate. During transcription, synthesizes subgenomic RNAs and assures their capping by a cap-snatching mechanism, which involves the endonuclease activity cleaving the host capped pre-mRNAs. These short capped RNAs are then used as primers for viral transcription. The 3'-end of subgenomic mRNAs molecules are heterogeneous and not polyadenylated. The replicase function is to direct synthesis of antigenomic and genomic RNA which are encapsidated and non capped. As a consequence of the use of the same enzyme for both transcription and replication, these mechanisms need to be well coordinated. These processes may be regulated by proteins N and Z in a dose-dependent manner. Z protein inhibits the viral polymerase L und thus the viral transcription and RNA synthesis. This chain is RNA-directed RNA polymerase L, found in Bolomys (OLVV).